A 129-amino-acid polypeptide reads, in one-letter code: Profilin-4 (129 aa).

Belongs to the profilin family. As to expression, expressed in testis, in germ cells in seminiferous tubules (at protein level).

Its subcellular location is the cytoplasm. Involved in male fertility. Required for manchette development and acrosome biogenesis during spermiogenesis. Binds in vitro to phospholipids, including phosphatidylinositol 3-phosphate (PtdIns(3)P), phosphatidylinositol 4,5-bisphosphate (PtdIns(4,5)P2), phosphatidylinositol 4-phosphate (PtdIns(4)P) and phosphatidic acid (PA). Contrary to other profilin family members, does not bind to actin in vitro. The chain is Profilin-4 (Pfn4) from Mus musculus (Mouse).